Consider the following 352-residue polypeptide: N-acetyl-gamma-glutamyl-phosphate reductase (352 aa).

The active site involves C155.

Belongs to the NAGSA dehydrogenase family. Type 1 subfamily.

The protein resides in the cytoplasm. It catalyses the reaction N-acetyl-L-glutamate 5-semialdehyde + phosphate + NADP(+) = N-acetyl-L-glutamyl 5-phosphate + NADPH + H(+). It participates in amino-acid biosynthesis; L-arginine biosynthesis; N(2)-acetyl-L-ornithine from L-glutamate: step 3/4. Catalyzes the NADPH-dependent reduction of N-acetyl-5-glutamyl phosphate to yield N-acetyl-L-glutamate 5-semialdehyde. The chain is N-acetyl-gamma-glutamyl-phosphate reductase from Crocosphaera subtropica (strain ATCC 51142 / BH68) (Cyanothece sp. (strain ATCC 51142)).